Reading from the N-terminus, the 507-residue chain is ATP synthase subunit alpha, chloroplastic (507 aa).

Gly-170–Thr-177 is a binding site for ATP. Thr-257 bears the Phosphothreonine mark.

Belongs to the ATPase alpha/beta chains family. As to quaternary structure, F-type ATPases have 2 components, CF(1) - the catalytic core - and CF(0) - the membrane proton channel. CF(1) has five subunits: alpha(3), beta(3), gamma(1), delta(1), epsilon(1). CF(0) has four main subunits: a, b, b' and c.

The protein resides in the plastid. It is found in the chloroplast thylakoid membrane. The enzyme catalyses ATP + H2O + 4 H(+)(in) = ADP + phosphate + 5 H(+)(out). Its function is as follows. Produces ATP from ADP in the presence of a proton gradient across the membrane. The alpha chain is a regulatory subunit. In Lepidium virginicum (Virginia pepperweed), this protein is ATP synthase subunit alpha, chloroplastic.